The sequence spans 194 residues: Holliday junction branch migration complex subunit RuvA (194 aa).

Residues 1 to 64 (MIAYIQGSIT…QDAHTLYGFS (64 aa)) form a domain I region. A domain II region spans residues 65 to 143 (TIEEKQCFLQ…KVGNMLSLQP (79 aa)). The segment at 144–150 (SGQEAIY) is flexible linker. Residues 150-194 (YQEALAALSKLGIHKSTAEKTVAAILKEHQGEITVESLIKLALKG) are domain III.

This sequence belongs to the RuvA family. Homotetramer. Forms an RuvA(8)-RuvB(12)-Holliday junction (HJ) complex. HJ DNA is sandwiched between 2 RuvA tetramers; dsDNA enters through RuvA and exits via RuvB. An RuvB hexamer assembles on each DNA strand where it exits the tetramer. Each RuvB hexamer is contacted by two RuvA subunits (via domain III) on 2 adjacent RuvB subunits; this complex drives branch migration. In the full resolvosome a probable DNA-RuvA(4)-RuvB(12)-RuvC(2) complex forms which resolves the HJ.

It is found in the cytoplasm. The RuvA-RuvB-RuvC complex processes Holliday junction (HJ) DNA during genetic recombination and DNA repair, while the RuvA-RuvB complex plays an important role in the rescue of blocked DNA replication forks via replication fork reversal (RFR). RuvA specifically binds to HJ cruciform DNA, conferring on it an open structure. The RuvB hexamer acts as an ATP-dependent pump, pulling dsDNA into and through the RuvAB complex. HJ branch migration allows RuvC to scan DNA until it finds its consensus sequence, where it cleaves and resolves the cruciform DNA. This Amoebophilus asiaticus (strain 5a2) protein is Holliday junction branch migration complex subunit RuvA.